A 123-amino-acid polypeptide reads, in one-letter code: Chaperone protein SycN (123 aa).

In terms of assembly, interacts with YscB to form a complex which specifically binds to YopN.

The protein localises to the cytoplasm. Its subcellular location is the cell inner membrane. Its function is as follows. Functions as a specific chaperone for YopN. It could facilitate the secretion and the subsequent translocation of YopN. The sequence is that of Chaperone protein SycN (sycN) from Yersinia pseudotuberculosis serotype I (strain IP32953).